The following is a 550-amino-acid chain: Methionine--tRNA ligase (550 aa).

The short motif at 10–22 (LPYPNNSSPHLGN) is the 'HIGH' region element. A 'KMSKS' region motif is present at residues 336-340 (KFSKS). Lysine 339 contributes to the ATP binding site.

It belongs to the class-I aminoacyl-tRNA synthetase family.

The enzyme catalyses tRNA(Met) + L-methionine + ATP = L-methionyl-tRNA(Met) + AMP + diphosphate. The polypeptide is Methionine--tRNA ligase (MARS) (Acanthamoeba polyphaga mimivirus (APMV)).